The sequence spans 168 residues: INO80 complex subunit 3 (168 aa).

Residues 115-129 show a composition bias toward polar residues; that stretch reads TNSTLSTPKSFHSPL. The disordered stretch occupies residues 115–168; that stretch reads TNSTLSTPKSFHSPLQSRGISPSSAQSSAAVSSSRKQKRKRTSEGPSERRARKK. Residues 130 to 148 show a composition bias toward low complexity; it reads QSRGISPSSAQSSAAVSSS. Residues 156–168 show a composition bias toward basic and acidic residues; sequence TSEGPSERRARKK.

As to quaternary structure, component of the INO80 chromatin remodeling complex.

The protein localises to the nucleus. In terms of biological role, component of the INO80 complex which remodels chromatin by shifting nucleosomes and is involved in DNA repair. The protein is INO80 complex subunit 3 (iec3) of Schizosaccharomyces pombe (strain 972 / ATCC 24843) (Fission yeast).